A 675-amino-acid chain; its full sequence is Alpha-1,4-glucan:maltose-1-phosphate maltosyltransferase 1 (675 aa).

Residues Lys-264, Gln-324, and Asp-359 each coordinate alpha-maltose 1-phosphate. Asp-394 acts as the Nucleophile in catalysis. Asn-395 contacts alpha-maltose 1-phosphate. Glu-423 (proton donor) is an active-site residue. 534–535 (KY) contacts alpha-maltose 1-phosphate.

Belongs to the glycosyl hydrolase 13 family. GlgE subfamily. As to quaternary structure, homodimer.

The catalysed reaction is alpha-maltose 1-phosphate + [(1-&gt;4)-alpha-D-glucosyl](n) = [(1-&gt;4)-alpha-D-glucosyl](n+2) + phosphate. Is competitively inhibited by alpha-, beta- and gamma-cyclodextrins (cyclic maltooligosaccharides), unlike GlgE from M.tuberculosis. In terms of biological role, maltosyltransferase that uses maltose 1-phosphate (M1P) as the sugar donor to elongate linear or branched alpha-(1-&gt;4)-glucans. Maltooligosaccharides with a degree of polymerization (DP) superior or equal to 4 are efficient acceptors, with DP6 being optimal in the GlgE-catalyzed polymerization with M1P. Is specific for the alpha-anomer of M1P as substrate, since the beta-anomer of M1P gives no activity. Alpha-D-glucose 1-phosphate cannot serve as a donor substrate, but alpha-maltosyl fluoride is an efficient donor in vitro. Exhibits an alpha-retaining catalytic mechanism, with evidence that maltooligosaccharide acceptors are extended at their non-reducing ends. Is also able to catalyze the reverse reaction in vitro, releasing M1P from glycogen or maltoheptaose in the presence of inorganic phosphate. Also catalyzes disproportionation reactions through maltosyl transfer between maltooligosaccharides. Is probably involved in a branched alpha-glucan biosynthetic pathway from trehalose, together with TreS, Mak and GlgB. This is Alpha-1,4-glucan:maltose-1-phosphate maltosyltransferase 1 (glgE1) from Streptomyces coelicolor (strain ATCC BAA-471 / A3(2) / M145).